The primary structure comprises 336 residues: Protein FPV127 (336 aa).

The interval 1 to 22 (MGGGLVLPTRDPPKEQDTSETA) is disordered.

It belongs to the poxviruses A16/G9/J5 family.

The chain is Protein FPV127 from Vertebrata (FPV).